The sequence spans 243 residues: Probable 2-phosphosulfolactate phosphatase (243 aa).

This sequence belongs to the ComB family. It depends on Mg(2+) as a cofactor.

It catalyses the reaction (2R)-O-phospho-3-sulfolactate + H2O = (2R)-3-sulfolactate + phosphate. This Prochlorococcus marinus (strain SARG / CCMP1375 / SS120) protein is Probable 2-phosphosulfolactate phosphatase.